Reading from the N-terminus, the 152-residue chain is ARL14 effector protein-like (152 aa).

The tract at residues 1–21 (MNEQSEKNNSIQERHTDHSFP) is disordered.

The polypeptide is ARL14 effector protein-like (ARL14EPL) (Homo sapiens (Human)).